The sequence spans 789 residues: MLCGRWRRCRRPPEEPPVAAQVAAQVAAPVALPSPPTPSDGGTKRPGLRALKKMGLTEDEDVRAMLRGSRLRKIRSRTWHKERLYRLQEDGLSVWFQRRIPRAPSQHIFFVQHIEAVREGHQSEGLRRFGGAFAPARCLTIAFKGRRKNLDLAAPTAEEAQRWVRGLTKLRARLDAMSQRERLDHWIHSYLHRADSNQDSKMSFKEIKSLLRMVNVDMNDMYAYLLFKECDHSNNDRLEGAEIEEFLRRLLKRPELEEIFHQYSGEDRVLSAPELLEFLEDQGEEGATLARAQQLIQTYELNETAKQHELMTLDGFMMYLLSPEGAALDNTHTCVFQDMNQPLAHYFISSSHNTYLTDSQIGGPSSTEAYVRAFAQGCRCVELDCWEGPGGEPVIYHGHTLTSKILFRDVVQAVRDHAFTLSPYPVILSLENHCGLEQQAAMARHLCTILGDMLVTQALDSPNPEELPSPEQLKGRVLVKGKKLPAARSEDGRALSDREEEEEDDEEEEEEVEAAAQRRLAKQISPELSALAVYCHATRLRTLHPAPNAPQPCQVSSLSERKAKKLIREAGNSFVRHNARQLTRVYPLGLRMNSANYSPQEMWNSGCQLVALNFQTPGYEMDLNAGRFLVNGQCGYVLKPACLRQPDSTFDPEYPGPPRTTLSIQVLTAQQLPKLNAEKPHSIVDPLVRIEIHGVPADCARQETDYVLNNGFNPRWGQTLQFQLRAPELALVRFVVEDYDATSPNDFVGQFTLPLSSLKQGYRHIHLLSKDGASLSPATLFIQIRIQRS.

Residues 63–172 (RAMLRGSRLR…WVRGLTKLRA (110 aa)) enclose the PH domain. The interval 73-101 (KIRSRTWHKERLYRLQEDGLSVWFQRRIP) is substrate binding. At Ser-105 the chain carries Phosphoserine. EF-hand domains lie at 182-217 (RLDHWIHSYLHRADSNQDSKMSFKEIKSLLRMVNVD), 218-253 (MNDMYAYLLFKECDHSNNDRLEGAEIEEFLRRLLKR), and 250-285 (LLKRPELEEIFHQYSGEDRVLSAPELLEFLEDQGEE). 10 residues coordinate Ca(2+): Asp-195, Asn-197, Asp-199, Lys-201, Glu-206, Asp-231, Ser-233, Asn-235, Arg-237, and Glu-242. The PI-PLC X-box domain maps to 337 to 482 (QDMNQPLAHY…LKGRVLVKGK (146 aa)). The active site involves His-352. Residues Asn-353, Glu-382, and Asp-384 each coordinate Ca(2+). Residue His-397 is part of the active site. Glu-431 lines the Ca(2+) pocket. The segment at 461–519 (SPNPEELPSPEQLKGRVLVKGKKLPAARSEDGRALSDREEEEEDDEEEEEEVEAAAQRR) is disordered. Substrate contacts are provided by Lys-480 and Lys-482. Basic and acidic residues predominate over residues 488–497 (RSEDGRALSD). The residue at position 496 (Ser-496) is a Phosphoserine. The span at 498 to 513 (REEEEEDDEEEEEEVE) shows a compositional bias: acidic residues. The PI-PLC Y-box domain occupies 528–644 (LSALAVYCHA…GYVLKPACLR (117 aa)). Position 557 (Ser-557) interacts with substrate. Phosphoserine is present on Ser-573. Arg-584 lines the substrate pocket. The C2 domain occupies 644-769 (RQPDSTFDPE…QGYRHIHLLS (126 aa)). Ca(2+)-binding residues include Ile-683, Asp-685, Asn-709, Asp-738, Tyr-739, and Asp-740.

Ca(2+) serves as cofactor. In terms of tissue distribution, present in corneal epithelial cells (at protein level).

Its subcellular location is the membrane. It is found in the cytoplasm. It localises to the cleavage furrow. The catalysed reaction is a 1,2-diacyl-sn-glycero-3-phospho-(1D-myo-inositol-4,5-bisphosphate) + H2O = 1D-myo-inositol 1,4,5-trisphosphate + a 1,2-diacyl-sn-glycerol + H(+). Strongly activated by phosphatidic acid. Inhibited by phosphatidylethanolamine (PtdEtn), phosphatidylcholine (PtdCho), sphingomyelin and phosphatidylserine (PtdSer). Hydrolyzes the phosphatidylinositol 4,5-bisphosphate (PIP2) to generate 2 second messenger molecules diacylglycerol (DAG) and inositol 1,4,5-trisphosphate (IP3). DAG mediates the activation of protein kinase C (PKC), while IP3 releases Ca(2+) from intracellular stores. Essential for trophoblast and placental development. May participate in cytokinesis by hydrolyzing PIP2 at the cleavage furrow. Regulates neurite outgrowth through the inhibition of RhoA/Rho kinase signaling. The sequence is that of 1-phosphatidylinositol 4,5-bisphosphate phosphodiesterase delta-3 from Homo sapiens (Human).